Reading from the N-terminus, the 94-residue chain is Neutrophil defensin 1 (94 aa).

Residues 1–19 form the signal peptide; the sequence is MRTLAILAAILLVALQAQA. Residues 20 to 64 constitute a propeptide that is removed on maturation; the sequence is EPLQARADEVAAAPEQIPADNPEVVVSLAWDESLAPKHPGSRKNV. Intrachain disulfides connect cysteine 66/cysteine 94, cysteine 68/cysteine 83, and cysteine 73/cysteine 93. Arginine 78 carries the post-translational modification ADP-ribosylarginine; by ART1. Tyrosine 85 is subject to Phosphotyrosine. Position 88 is an ADP-ribosylarginine; by ART1 (arginine 88).

The protein belongs to the alpha-defensin family. As to quaternary structure, tetramer. Dimer. Interacts with RETN. Post-translationally, ADP-ribosylation drastically reduces cytotoxic and antibacterial activities, and enhances IL8 production.

It localises to the secreted. In terms of biological role, effector molecule of the innate immune system that acts via antibiotic-like properties against a broad array of infectious agents including bacteria, fungi, and viruses or by promoting the activation and maturation of some APCs. Interacts with the essential precursor of cell wall synthesis lipid II to inhibit bacterial cell wall synthesis. Inhibits adenovirus infection via inhibition of viral disassembly at the vertex region, thereby restricting the release of internal capsid protein pVI, which is required for endosomal membrane penetration during cell entry. In addition, interaction with adenovirus capsid leads to the redirection of viral particles to TLR4 thereby promoting a NLRP3-mediated inflammasome response and interleukin 1-beta (IL-1beta) release. Induces the production of proinflammatory cytokines including type I interferon (IFN) in plasmacytoid dendritic cells (pDCs) by triggering the degradation of NFKBIA and nuclear translocation of IRF1, both of which are required for activation of pDCs. The protein is Neutrophil defensin 1 (DEFA1) of Pan troglodytes (Chimpanzee).